Here is a 385-residue protein sequence, read N- to C-terminus: Transcription termination factor 2, mitochondrial (385 aa).

The transit peptide at 1-35 directs the protein to the mitochondrion; it reads MLWKLLLRSQSCRLCSFRKMRSPPKYRPFLACFTY.

The protein belongs to the mTERF family. As to quaternary structure, monomer. As to expression, expressed in skeletal muscle, heart, liver and pancreas.

Its subcellular location is the mitochondrion. It localises to the mitochondrion matrix. The protein resides in the mitochondrion nucleoid. Binds mitochondrial DNA and plays a role in the regulation of transcription of mitochondrial mRNA and rRNA species. The sequence is that of Transcription termination factor 2, mitochondrial (MTERF2) from Homo sapiens (Human).